We begin with the raw amino-acid sequence, 227 residues long: uncharacterized protein (227 aa).

Residues 1 to 23 (MKKLTVTFLTFISIFFAATAAFA) form the signal peptide.

This is an uncharacterized protein from Coxiella burnetii (strain RSA 493 / Nine Mile phase I).